The chain runs to 323 residues: Probable pectate lyase A (323 aa).

Positions 1 to 20 are cleaved as a signal peptide; it reads MTNFKWIVAAAGLLSGQVLA. N-linked (GlcNAc...) asparagine glycosylation is present at asparagine 95. Aspartate 136, aspartate 165, and aspartate 169 together coordinate Ca(2+). The active site involves arginine 222.

This sequence belongs to the polysaccharide lyase 1 family. It depends on Ca(2+) as a cofactor.

It localises to the secreted. The catalysed reaction is Eliminative cleavage of (1-&gt;4)-alpha-D-galacturonan to give oligosaccharides with 4-deoxy-alpha-D-galact-4-enuronosyl groups at their non-reducing ends.. In terms of biological role, pectinolytic enzyme consist of four classes of enzymes: pectin lyase, polygalacturonase, pectin methylesterase and rhamnogalacturonase. Among pectinolytic enzymes, pectin lyase is the most important in depolymerization of pectin, since it cleaves internal glycosidic bonds of highly methylated pectins. Favors pectate, the anion, over pectin, the methyl ester. This chain is Probable pectate lyase A (plyA), found in Aspergillus niger (strain ATCC MYA-4892 / CBS 513.88 / FGSC A1513).